A 401-amino-acid chain; its full sequence is Tryptophan synthase beta chain (401 aa).

Position 88 is an N6-(pyridoxal phosphate)lysine (Lys-88).

The protein belongs to the TrpB family. As to quaternary structure, tetramer of two alpha and two beta chains. Pyridoxal 5'-phosphate serves as cofactor.

It catalyses the reaction (1S,2R)-1-C-(indol-3-yl)glycerol 3-phosphate + L-serine = D-glyceraldehyde 3-phosphate + L-tryptophan + H2O. The protein operates within amino-acid biosynthesis; L-tryptophan biosynthesis; L-tryptophan from chorismate: step 5/5. Its function is as follows. The beta subunit is responsible for the synthesis of L-tryptophan from indole and L-serine. The protein is Tryptophan synthase beta chain of Shewanella denitrificans (strain OS217 / ATCC BAA-1090 / DSM 15013).